The primary structure comprises 106 residues: Large ribosomal subunit protein uL24 (106 aa).

This sequence belongs to the universal ribosomal protein uL24 family. In terms of assembly, part of the 50S ribosomal subunit.

Its function is as follows. One of two assembly initiator proteins, it binds directly to the 5'-end of the 23S rRNA, where it nucleates assembly of the 50S subunit. In terms of biological role, one of the proteins that surrounds the polypeptide exit tunnel on the outside of the subunit. The sequence is that of Large ribosomal subunit protein uL24 from Verminephrobacter eiseniae (strain EF01-2).